The sequence spans 109 residues: MFGKGGLGGLMKQAQQMQERMQKMQDEIAQLEVTGESGAGLVKITLNGAHNCRRIEIDPSLMEEDKEMLEDLIAAAFNDAVRRAEEMQKEKMASVTAGMSLPPGFKMPF.

Residues 1–23 are disordered; sequence MFGKGGLGGLMKQAQQMQERMQK.

This sequence belongs to the YbaB/EbfC family. As to quaternary structure, homodimer.

The protein resides in the cytoplasm. The protein localises to the nucleoid. Functionally, binds to DNA and alters its conformation. May be involved in regulation of gene expression, nucleoid organization and DNA protection. This is Nucleoid-associated protein Asuc_0997 from Actinobacillus succinogenes (strain ATCC 55618 / DSM 22257 / CCUG 43843 / 130Z).